We begin with the raw amino-acid sequence, 500 residues long: MHLSMGGLLPGLALLASANALALALPLESSVYTVQVTNPFHESLFSCPAASWPKVKLGSENRSQEPSKDLKKILSQISPKRIEATIRKLVSFGTRHTLSTQTNATYGIGAARDWIESEFQRYANASDGRLTVAVVGYDQQPDGRRIPFPVRISDVVATLKGEGDPERVYLVSGHYDSRNSDALDYKGIAPGANDDASGVAVSLELARVMSQRGLPRPKATIVFAAVAGEEQGLYGATFLAQSYRNSSANIEGMFTNDIIGSSTADDGTREPHVVRLFAQGIPPLNVEDQAMRERRIMIGGDNDTPARQLARFVKETAENKHTDMEVSVIYRLDRYLRGGDHRPFLEAGYPAARFTEPNENFAHQHQDIRIDKDPKTGMDIQYGDLPEFCDFDYISRVGKVNAAALWNLAMSPGMPRNVRVNTSDLTNDSKFTWDPPAGGNALVGGYEIVWRSTNAPFWTHKMDVGMVQEATIDLSKDNVIFGIRARGKNGERGVAVLPFP.

A signal peptide spans 1–24 (MHLSMGGLLPGLALLASANALALA). N-linked (GlcNAc...) asparagine glycans are attached at residues N61, N103, and N124. 3 residues coordinate Zn(2+): H174, D194, and E230. N245 carries an N-linked (GlcNAc...) asparagine glycan. Position 257 (D257) interacts with Zn(2+). In terms of domain architecture, Fibronectin type-III spans 414-500 (MPRNVRVNTS…ERGVAVLPFP (87 aa)). N421 and N427 each carry an N-linked (GlcNAc...) asparagine glycan.

Belongs to the peptidase M28 family. M28B subfamily. Zn(2+) serves as cofactor.

It localises to the secreted. This chain is Probable zinc metalloprotease MGYG_02393, found in Arthroderma gypseum (strain ATCC MYA-4604 / CBS 118893) (Microsporum gypseum).